Consider the following 349-residue polypeptide: Cytoplasmic tRNA 2-thiolation protein 2 (349 aa).

Belongs to the CTU2/NCS2 family.

Its subcellular location is the cytoplasm. Its pathway is tRNA modification; 5-methoxycarbonylmethyl-2-thiouridine-tRNA biosynthesis. Its function is as follows. Plays a central role in 2-thiolation of mcm(5)S(2)U at tRNA wobble positions of tRNA(Lys), tRNA(Glu) and tRNA(Gln). May act by forming a heterodimer with tut-1/ctu-1 that ligates sulfur from thiocarboxylated urm-1 onto the uridine of tRNAs at wobble position. The sequence is that of Cytoplasmic tRNA 2-thiolation protein 2 from Caenorhabditis elegans.